We begin with the raw amino-acid sequence, 275 residues long: Large ribosomal subunit protein uL2 (275 aa).

Disordered regions lie at residues 36-55 and 223-275; these read KQSK…RHQG and VAMN…RHKR. Over residues 39-48 the composition is skewed to polar residues; the sequence is KNAGRNNSGR. A compositionally biased stretch (basic and acidic residues) spans 229–239; it reads DHPHGGGEGRT.

The protein belongs to the universal ribosomal protein uL2 family. As to quaternary structure, part of the 50S ribosomal subunit. Forms a bridge to the 30S subunit in the 70S ribosome.

In terms of biological role, one of the primary rRNA binding proteins. Required for association of the 30S and 50S subunits to form the 70S ribosome, for tRNA binding and peptide bond formation. It has been suggested to have peptidyltransferase activity; this is somewhat controversial. Makes several contacts with the 16S rRNA in the 70S ribosome. This is Large ribosomal subunit protein uL2 from Aromatoleum aromaticum (strain DSM 19018 / LMG 30748 / EbN1) (Azoarcus sp. (strain EbN1)).